A 413-amino-acid polypeptide reads, in one-letter code: MTSLKYIIKLTFEVDGSVDKPDVIGAIFGQTENLFGQEFDLRELQDKGRLGRIIVEIKNKGGKAEGYIEIPSNLDRVETALIASMVESVEKVGPYNAKFELKEIEDVRAEKLKKIIERAKQILTTWTREKNLDIKEVMNEISGAVKTGELIEYGPERLPAGPDVYTDPNLIIVEGRADIINLLRYGYKNTVAVEGASGKIPQSVVELSKNKKMVIAFLDGDHGGDMILKDLINANVKIDYVARAPVGREVEELTGKEIAKSLSNMIPLSQYLKRQQESIASVSSRIETASARAEVAEQQTVQVVEQPRKEIEIKIPGNVMEEIKKLPGTLEGIIFDENWNLVERVQVRDIITKLENLTNGNASFIIFDGVITQRLLELAASKNVKLIIGVRIGGINKKPENVKILTLADVIGP.

The 79-residue stretch at 168–246 (PNLIIVEGRA…KIDYVARAPV (79 aa)) folds into the Toprim domain. 3 residues coordinate Mg(2+): glutamate 174, aspartate 219, and aspartate 221.

Belongs to the archaeal DnaG primase family. In terms of assembly, forms a ternary complex with MCM helicase and DNA. Component of the archaeal exosome complex. Mg(2+) serves as cofactor.

The enzyme catalyses ssDNA + n NTP = ssDNA/pppN(pN)n-1 hybrid + (n-1) diphosphate.. Its function is as follows. RNA polymerase that catalyzes the synthesis of short RNA molecules used as primers for DNA polymerase during DNA replication. Also part of the exosome, which is a complex involved in RNA degradation. Acts as a poly(A)-binding protein that enhances the interaction between heteromeric, adenine-rich transcripts and the exosome. In Metallosphaera sedula (strain ATCC 51363 / DSM 5348 / JCM 9185 / NBRC 15509 / TH2), this protein is DNA primase DnaG.